A 349-amino-acid polypeptide reads, in one-letter code: GDSL esterase/lipase At2g19060 (349 aa).

An N-terminal signal peptide occupies residues 1–25 (MADKMFKALLWAFATAVVMAEAVRG). Ser37 (nucleophile) is an active-site residue. N-linked (GlcNAc...) asparagine glycosylation occurs at Asn178. Catalysis depends on residues Asp317 and His320.

Belongs to the 'GDSL' lipolytic enzyme family.

It localises to the secreted. This Arabidopsis thaliana (Mouse-ear cress) protein is GDSL esterase/lipase At2g19060.